Reading from the N-terminus, the 203-residue chain is V-type ATP synthase subunit D (203 aa).

Belongs to the V-ATPase D subunit family.

In terms of biological role, produces ATP from ADP in the presence of a proton gradient across the membrane. This chain is V-type ATP synthase subunit D, found in Streptococcus pneumoniae serotype 19F (strain G54).